A 479-amino-acid chain; its full sequence is Adenosylhomocysteinase (479 aa).

Positions 65, 145, and 205 each coordinate substrate. 206–208 (TTT) is a binding site for NAD(+). Residues K235 and D239 each coordinate substrate. Residues N240, 269 to 274 (GYGDVG), E292, N327, 348 to 350 (IGH), and N393 contribute to the NAD(+) site.

Belongs to the adenosylhomocysteinase family. NAD(+) serves as cofactor.

The protein localises to the cytoplasm. It catalyses the reaction S-adenosyl-L-homocysteine + H2O = L-homocysteine + adenosine. Its pathway is amino-acid biosynthesis; L-homocysteine biosynthesis; L-homocysteine from S-adenosyl-L-homocysteine: step 1/1. Functionally, may play a key role in the regulation of the intracellular concentration of adenosylhomocysteine. This is Adenosylhomocysteinase from Herminiimonas arsenicoxydans.